Consider the following 420-residue polypeptide: Tyrosine--tRNA ligase (420 aa).

Y36 contributes to the L-tyrosine binding site. The 'HIGH' region motif lies at 41–50; the sequence is PTADSMHIGH. Residues Y170 and Q174 each coordinate L-tyrosine. Positions 231 to 235 match the 'KMSKS' region motif; it reads KFGKS. K234 contacts ATP. Residues 353-420 form the S4 RNA-binding domain; the sequence is TNIVDFIVEA…KKKYFMVKYK (68 aa).

The protein belongs to the class-I aminoacyl-tRNA synthetase family. TyrS type 1 subfamily. In terms of assembly, homodimer.

The protein localises to the cytoplasm. The enzyme catalyses tRNA(Tyr) + L-tyrosine + ATP = L-tyrosyl-tRNA(Tyr) + AMP + diphosphate + H(+). In terms of biological role, catalyzes the attachment of tyrosine to tRNA(Tyr) in a two-step reaction: tyrosine is first activated by ATP to form Tyr-AMP and then transferred to the acceptor end of tRNA(Tyr). In Staphylococcus carnosus (strain TM300), this protein is Tyrosine--tRNA ligase.